The following is a 405-amino-acid chain: Putative phosphate permease PYRAB14010 (405 aa).

The next 11 membrane-spanning stretches (helical) occupy residues 3 to 23 (MDPW…AIGA), 44 to 64 (AVLI…KTVT), 82 to 102 (VLVY…VIAT), 114 to 134 (IIGG…VNWG), 138 to 158 (SVVL…FFIF), 181 to 201 (VWIG…VLHG), 207 to 227 (GVLK…SMIL), 264 to 284 (VANA…GMAG), 287 to 307 (VPVP…GVAT), 329 to 349 (FTID…GMPI), and 384 to 404 (FVTV…LWIV).

It belongs to the inorganic phosphate transporter (PiT) (TC 2.A.20) family.

It localises to the cell membrane. Functionally, potential transporter for phosphate. This Pyrococcus abyssi (strain GE5 / Orsay) protein is Putative phosphate permease PYRAB14010.